A 279-amino-acid polypeptide reads, in one-letter code: 3-methyl-2-oxobutanoate hydroxymethyltransferase (279 aa).

Residues aspartate 43 and aspartate 82 each contribute to the Mg(2+) site. Residues 43–44, aspartate 82, and lysine 112 each bind 3-methyl-2-oxobutanoate; that span reads DS. Glutamate 114 contributes to the Mg(2+) binding site. The active-site Proton acceptor is the glutamate 181.

This sequence belongs to the PanB family. Homodecamer; pentamer of dimers. Mg(2+) is required as a cofactor.

The protein resides in the cytoplasm. It carries out the reaction 3-methyl-2-oxobutanoate + (6R)-5,10-methylene-5,6,7,8-tetrahydrofolate + H2O = 2-dehydropantoate + (6S)-5,6,7,8-tetrahydrofolate. The protein operates within cofactor biosynthesis; (R)-pantothenate biosynthesis; (R)-pantoate from 3-methyl-2-oxobutanoate: step 1/2. Its function is as follows. Catalyzes the reversible reaction in which hydroxymethyl group from 5,10-methylenetetrahydrofolate is transferred onto alpha-ketoisovalerate to form ketopantoate. This chain is 3-methyl-2-oxobutanoate hydroxymethyltransferase, found in Geobacillus kaustophilus (strain HTA426).